Here is a 465-residue protein sequence, read N- to C-terminus: Putative apoptosis inhibitor ORF106 (465 aa).

Residues 291-357 (RECSFSTWPK…MEKETCGWLE (67 aa)) form a BIR repeat. Residues 373–382 (EGGEDKEEDG) are compositionally biased toward acidic residues. Residues 373-393 (EGGEDKEEDGGGGGVIEFPKN) are disordered. An RING-type zinc finger spans residues 405–447 (CKACYERKADIAFIPCGHVFSCNICTMEMFASYKKKKRCPMCR).

In Magallana gigas (Pacific oyster), this protein is Putative apoptosis inhibitor ORF106.